A 280-amino-acid chain; its full sequence is Protein synthesis inhibitor II (280 aa).

Position 1 is an N-acetylalanine (A1). The active site involves E174.

It belongs to the ribosome-inactivating protein family. Type 1 RIP subfamily.

It localises to the cytoplasm. The enzyme catalyses Endohydrolysis of the N-glycosidic bond at one specific adenosine on the 28S rRNA.. In terms of biological role, inhibits the elongation phase of protein synthesis. It inactivates fungal ribosomes even more effectively than mammalian ribosomes and is thought to function as a constitutive antifungal agent in plants. This Hordeum vulgare (Barley) protein is Protein synthesis inhibitor II (RIP30A).